We begin with the raw amino-acid sequence, 444 residues long: Methylenetetrahydrofolate--tRNA-(uracil-5-)-methyltransferase TrmFO (444 aa).

Residue 10–15 participates in FAD binding; that stretch reads GAGLAG.

The protein belongs to the MnmG family. TrmFO subfamily. FAD serves as cofactor.

It is found in the cytoplasm. The enzyme catalyses uridine(54) in tRNA + (6R)-5,10-methylene-5,6,7,8-tetrahydrofolate + NADH + H(+) = 5-methyluridine(54) in tRNA + (6S)-5,6,7,8-tetrahydrofolate + NAD(+). The catalysed reaction is uridine(54) in tRNA + (6R)-5,10-methylene-5,6,7,8-tetrahydrofolate + NADPH + H(+) = 5-methyluridine(54) in tRNA + (6S)-5,6,7,8-tetrahydrofolate + NADP(+). In terms of biological role, catalyzes the folate-dependent formation of 5-methyl-uridine at position 54 (M-5-U54) in all tRNAs. The polypeptide is Methylenetetrahydrofolate--tRNA-(uracil-5-)-methyltransferase TrmFO (Streptococcus pneumoniae serotype 4 (strain ATCC BAA-334 / TIGR4)).